The primary structure comprises 689 residues: Solute carrier organic anion transporter family member 1B2 (689 aa).

Topologically, residues 1 to 26 (MDQTQHPSKAAQPLRSEKTRHCDGFR) are cytoplasmic. Residues 27-46 (IFLAALSFSYICKALGGVIM) form a helical membrane-spanning segment. The Extracellular portion of the chain corresponds to 47–65 (KSSITQIERRFDIPSSISG). A helical transmembrane segment spans residues 66–86 (LIDGGFEIGNLLVIVFVSYFG). The Cytoplasmic portion of the chain corresponds to 87 to 92 (SKLHRP). The helical transmembrane segment at 93-117 (KLIGTGCFIMGIGSILTALPHFFMG) threads the bilayer. The Extracellular portion of the chain corresponds to 118–163 (YYRYATENDISSLHNSTLTCLVNQTTSLTGTSPEIMEKGCEKGSNS). N132 and N140 each carry an N-linked (GlcNAc...) asparagine glycan. Residues 164–192 (YTWIYVLMGNMLRGIGETPIVPLGVSYID) form a helical membrane-spanning segment. Residues 193–211 (DFAKEGNSSMYLGTLHTIA) are Cytoplasmic-facing. The chain crosses the membrane as a helical span at residues 212 to 232 (MIGPILGFIMSSVFAKLYVDV). Residues 233–250 (GYVDLRSVRITPQDARWV) lie on the Extracellular side of the membrane. The chain crosses the membrane as a helical span at residues 251–275 (GAWWLGFIVNGLLCIICSIPFFFLP). Over 276 to 326 (KIPKRSQKERKNSASLHVLKTDEDKNPVTNPTTQEKQAPANLTGFLWSLRS) the chain is Cytoplasmic. S288 and S290 each carry phosphoserine. A helical transmembrane segment spans residues 327–348 (ILTNEQYVIFLILTLLQISSFI). The Extracellular segment spans residues 349–368 (GSFTYLFKFIEQQFGQTASQ). A helical transmembrane segment spans residues 369–392 (ANFLLGVITIPTMASGMFLGGYLI). Over 393–396 (KRLK) the chain is Cytoplasmic. The chain crosses the membrane as a helical span at residues 397 to 420 (LTLLGITKFVFFTTTMAYVFYLSY). Over 421–533 (FLLICENKAF…DKCKTKYYFY (113 aa)) the chain is Extracellular. One can recognise a Kazal-like domain in the interval 448–505 (DVPLSYCNSDCICDKNQWEPVCGENGVTYISPCLAGCKSFRGDKKLMNIEFYDCSCVS). 3 disulfides stabilise this stretch: C454-C484, C460-C480, and C469-C503. N513 carries an N-linked (GlcNAc...) asparagine glycan. Residues 534–556 (ITFQVIISFFTALGSTSLMLILI) form a helical membrane-spanning segment. The Cytoplasmic segment spans residues 557–565 (RSVQPELKS). A helical membrane pass occupies residues 566–591 (LGMGFHSLVVRTLGGILAPVYYGALI). Residues 592 to 625 (DRTCMKWSVTSCGARGACRLYNSRLFGMIYVGLS) lie on the Extracellular side of the membrane. Residues 626-643 (IALKTPILLLYVALIYVM) traverse the membrane as a helical segment. Topologically, residues 644-689 (KRKMKRNDNKILENGRKFTDEGNPEPVNNNGYSCVPSDEKNSETPL) are cytoplasmic. The tract at residues 658–689 (GRKFTDEGNPEPVNNNGYSCVPSDEKNSETPL) is disordered. Phosphothreonine is present on T662. S680 carries the phosphoserine modification. Residues 680 to 689 (SDEKNSETPL) are compositionally biased toward basic and acidic residues.

The protein belongs to the organo anion transporter (TC 2.A.60) family. As to expression, liver specific.

Its subcellular location is the cell membrane. It catalyses the reaction estrone 3-sulfate(out) = estrone 3-sulfate(in). It carries out the reaction taurocholate(out) = taurocholate(in). The enzyme catalyses prostaglandin E2(out) = prostaglandin E2(in). The catalysed reaction is L-thyroxine(out) = L-thyroxine(in). Functionally, mediates the Na(+)-independent uptake of organic anions such as taurochlate, bromosulfophthalein and steroid conjugates (estrone 3-sulfate, 17-beta-glucuronosyl estradiol, dehydroepiandrosterone sulfate). Also transports prostaglandin E2 and L-thyroxine (T4). Shows a pH-sensitive substrate specificity which may be ascribed to the protonation state of the binding site and leads to a stimulation of substrate transport in an acidic microenvironment. Hydrogencarbonate/HCO3(-) acts as the probable counteranion that exchanges for organic anions. The protein is Solute carrier organic anion transporter family member 1B2 (Slco1b2) of Mus musculus (Mouse).